A 510-amino-acid chain; its full sequence is Pentatricopeptide repeat-containing protein At1g71060, mitochondrial (510 aa).

The transit peptide at 1–14 (MVFSRFFRVTGVNL) directs the protein to the mitochondrion. 10 PPR repeats span residues 127–157 (TTSN…MKAK), 161–195 (SKET…GFKM), 196–230 (ESSD…RFEP), 231–265 (DIKS…GFEP), 266–300 (DVVA…NCKP), 301–335 (SPHI…GFPL), 336–370 (EAPT…GVGP), 371–401 (NART…MSCE), 403–437 (TVST…GVLP), and 438–472 (GMHM…GIRP).

Belongs to the PPR family. P subfamily.

The protein localises to the mitochondrion. The protein is Pentatricopeptide repeat-containing protein At1g71060, mitochondrial of Arabidopsis thaliana (Mouse-ear cress).